Reading from the N-terminus, the 311-residue chain is Dehydrogenase/reductase SDR family member 7C (311 aa).

An N-terminal signal peptide occupies residues 1-18 (MGLMAVLMLPLLLLGISG). Residues Ser47, Leu49, Tyr191, Lys195, and Ser226 each coordinate NAD(+). Tyr191 serves as the catalytic Proton acceptor.

It belongs to the short-chain dehydrogenases/reductases (SDR) family. In terms of tissue distribution, expressed in skeletal muscle and cardiac muscle. Also expressed in liver, kidney, adipocytes and skin.

It localises to the sarcoplasmic reticulum membrane. It catalyses the reaction all-trans-retinol + NAD(+) = all-trans-retinal + NADH + H(+). Functionally, NADH-dependent oxidoreductase which catalyzes the oxidation of all-trans-retinol to all-trans-retinal. Plays a role in the regulation of cardiac and skeletal muscle metabolic functions. Maintains Ca(2+) intracellular homeostasis by repressing Ca(2+) release from the sarcoplasmic reticulum (SR) in myotubes, possibly through local alternations in NAD/NADH or retinol/retinal. Also plays a role in Ca(2+) homeostasis by controlling Ca(2+) overload in the cytosol and the SR in myotubes. Involved in glucose uptake into skeletal muscles and muscle performance by activating PI3K and mTORC2-mediated AKT1 phosphorylation signaling pathways, possibly through the action of its downstream catalytic product all-trans-retinoic acid. The sequence is that of Dehydrogenase/reductase SDR family member 7C from Mus musculus (Mouse).